Here is a 222-residue protein sequence, read N- to C-terminus: MAGKPTLHYFNGRGRMECIRWLLAAAGVEFEEKFIEKPEDLDKLKNDGSLMFQQVPMVEIDGMKLVQTRAILNYIATKYNLYGKDMKERALIDMYSEGVADLGEMIMHFPLCPPAEKDAKLTLIREKTTNRYLPAFENVLKSHGQDYLVGNKLSRADIHLVELLYYVEELDPSLLANFPLLKALKARVSNIPAVKKFLQPGSQRKPPTDEKKIEEARKVFKF.

An N-acetylmethionine modification is found at M1. Position 2 is an N-acetylalanine; in Glutathione S-transferase A1, N-terminally processed (A2). A GST N-terminal domain is found at 3–83; it reads GKPTLHYFNG…YIATKYNLYG (81 aa). At K4 the chain carries N6-succinyllysine. Glutathione contacts are provided by residues Y9, K45, 54–55, and 67–68; these read QV and QT. Residues 85–208 enclose the GST C-terminal domain; it reads DMKERALIDM…QPGSQRKPPT (124 aa).

The protein belongs to the GST superfamily. Alpha family. In terms of assembly, homodimer or heterodimer of GSTA1 and GSTA2. Expressed in corpus luteum, adrenal gland, testis, liver, lung, thyroid and kidney.

The protein resides in the cytoplasm. It carries out the reaction RX + glutathione = an S-substituted glutathione + a halide anion + H(+). The enzyme catalyses prostaglandin A2 + glutathione = prostaglandin A2-S-(R)-glutathione. The catalysed reaction is prostaglandin J2 + glutathione = prostaglandin J2-S-(R)-glutathione. It catalyses the reaction (13S)-hydroperoxy-(9Z,11E)-octadecadienoate + 2 glutathione = (13S)-hydroxy-(9Z,11E)-octadecadienoate + glutathione disulfide + H2O. It carries out the reaction androst-5-ene-3,17-dione = androst-4-ene-3,17-dione. In terms of biological role, glutathione S-transferase that catalyzes the nucleophilic attack of the sulfur atom of glutathione on the electrophilic groups of a wide range of exogenous and endogenous compounds. Involved in the formation of glutathione conjugates of both prostaglandin A2 (PGA2) and prostaglandin J2 (PGJ2). It also catalyzes the isomerization of D5-androstene-3,17-dione (AD) into D4-androstene-3,17-dione and may therefore play an important role in hormone biosynthesis. Through its glutathione-dependent peroxidase activity toward the fatty acid hydroperoxide (13S)-hydroperoxy-(9Z,11E)-octadecadienoate/13-HPODE it is also involved in the metabolism of oxidized linoleic acid. The sequence is that of Glutathione S-transferase A1 (GSTA1) from Bos taurus (Bovine).